Reading from the N-terminus, the 484-residue chain is ATP-dependent rRNA helicase RRP3 (484 aa).

Composition is skewed to low complexity over residues 1–14 and 22–34; these read MPSP…SMSQ and PSPA…APEA. Residues 1–38 are disordered; that stretch reads MPSPSPEASSSMSQPGPPSRSPSPASSNPDAPEASHNK. Positions 38–66 match the Q motif motif; the sequence is KTFADLGISPELCRACASMGFKKPSDIQA. The Helicase ATP-binding domain occupies 69–240; it reads IPHALEGKDI…RASLNKPVRV (172 aa). Position 82–89 (82–89) interacts with ATP; that stretch reads AQTGSGKT. The DEAD box motif lies at 188-191; it reads DEAD. In terms of domain architecture, Helicase C-terminal spans 263 to 411; that stretch reads NKDAYLLYLA…SFDVDKEAVA (149 aa). Positions 425–484 are disordered; that stretch reads ALEMRESGTGGGGGKRGRDKGKRKTFGDGDDRDRDDDVVEAGVPRKKNKFTPGGKKKARK. Composition is skewed to basic residues over residues 439–448 and 468–484; these read KRGRDKGKRK and PRKK…KARK.

This sequence belongs to the DEAD box helicase family. DDX47/RRP3 subfamily. As to quaternary structure, interacts with the SSU processome.

The protein localises to the nucleus. The catalysed reaction is ATP + H2O = ADP + phosphate + H(+). In terms of biological role, ATP-dependent rRNA helicase required for pre-ribosomal RNA processing. Involved in the maturation of the 35S-pre-rRNA and to its cleavage to mature 18S rRNA. This chain is ATP-dependent rRNA helicase RRP3, found in Cryptococcus neoformans var. neoformans serotype D (strain B-3501A) (Filobasidiella neoformans).